The following is a 138-amino-acid chain: Small ribosomal subunit protein uS9 (138 aa).

It belongs to the universal ribosomal protein uS9 family.

This chain is Small ribosomal subunit protein uS9 (rps9), found in Sulfolobus acidocaldarius (strain ATCC 33909 / DSM 639 / JCM 8929 / NBRC 15157 / NCIMB 11770).